The primary structure comprises 151 residues: MLKEFREFALKGNVVDMAVGIIIGGAFGALVNSLVNDLLMPPLGLLLKGVDFSNLFVVLKEGTPPGPYIALADAKTAGAVTLNYGLFVNALIGFLIMAFAVFLLVRSINRLRSLSEKSAAPAVAPQTKECPFCFSIIPLKAVRCPNCTSQL.

Helical transmembrane passes span 14–34 and 85–105; these read VVDMAVGIIIGGAFGALVNSL and GLFVNALIGFLIMAFAVFLLV.

Belongs to the MscL family. As to quaternary structure, homopentamer.

It is found in the cell inner membrane. In terms of biological role, channel that opens in response to stretch forces in the membrane lipid bilayer. May participate in the regulation of osmotic pressure changes within the cell. This is Large-conductance mechanosensitive channel from Chlorobaculum tepidum (strain ATCC 49652 / DSM 12025 / NBRC 103806 / TLS) (Chlorobium tepidum).